We begin with the raw amino-acid sequence, 57 residues long: Protein CgkB (57 aa).

The protein is Protein CgkB (cgkB) of Pseudoalteromonas carrageenovora (Alteromonas carrageenovora).